Consider the following 301-residue polypeptide: tRNA dimethylallyltransferase (301 aa).

9-16 contacts ATP; it reads GPTASGKS. Substrate is bound at residue 11 to 16; it reads TASGKS. Residues 34–37 form an interaction with substrate tRNA region; sequence DSMQ.

Belongs to the IPP transferase family. In terms of assembly, monomer. It depends on Mg(2+) as a cofactor.

The catalysed reaction is adenosine(37) in tRNA + dimethylallyl diphosphate = N(6)-dimethylallyladenosine(37) in tRNA + diphosphate. In terms of biological role, catalyzes the transfer of a dimethylallyl group onto the adenine at position 37 in tRNAs that read codons beginning with uridine, leading to the formation of N6-(dimethylallyl)adenosine (i(6)A). The sequence is that of tRNA dimethylallyltransferase from Corynebacterium efficiens (strain DSM 44549 / YS-314 / AJ 12310 / JCM 11189 / NBRC 100395).